The sequence spans 567 residues: MFLPTTREEMRKLGWKELDIILVTGDAYVDHPSFGVAFIGHYLVSHGFKVGIIAQPDWRTEKDITRLGRPRLFFGVTAGNVDSMVANYTASKKKRKTDDYTPGGIGGKRPDRATIVYTNLIKRFFPEVPVVLGGLEASLRRFAHYDWWSDRVRKSVLVDSKADLLVYGMGEKAVLGIAQILSRTGDIEKCKSIRGVVWWASQKPEEGIELPSYDEISENPEKYAEALKLQTWYTDPYKNIPIYQRQDTRYVVQNPPQPPLSQEELDRLYLLPFEREVHPFYAKMGKVKAIETVKFSITAVRGCFGNCSFCALTQHQTTHVSYRSKDSILEEVRILTKKKDFKGTITDVGGPTANLYGSGCSIRETKGQCQKFCLYPIVCKVVRPNHDEFISLLESIRQIPGVRNVFVSSGIRHDFVFAEKDPDVFIRELVKYTPGQLKLAPEHAHPKVLSLMRKPPVELFLEFKKRFETLAKKMGKRKYVIGYFIVGHPGEGWRENNYLRDFILKHLGYFPQQIQIFTPTPGTVSTAMYYSGVDPFTGEKVHVERSLKVRNKMKENVLFKKKGREKR.

The Radical SAM core domain occupies 288–560 (KAIETVKFSI…NKMKENVLFK (273 aa)). 3 residues coordinate [4Fe-4S] cluster: C303, C307, and C310.

The protein belongs to the UPF0313 family. Requires [4Fe-4S] cluster as cofactor.

In Thermotoga maritima (strain ATCC 43589 / DSM 3109 / JCM 10099 / NBRC 100826 / MSB8), this protein is UPF0313 protein TM_0337.